The sequence spans 140 residues: Nucleoside diphosphate kinase (140 aa).

The ATP site is built by K11, F59, R87, T93, R104, and N114. Catalysis depends on H117, which acts as the Pros-phosphohistidine intermediate.

It belongs to the NDK family. In terms of assembly, homotetramer. The cofactor is Mg(2+).

The protein localises to the cytoplasm. It carries out the reaction a 2'-deoxyribonucleoside 5'-diphosphate + ATP = a 2'-deoxyribonucleoside 5'-triphosphate + ADP. It catalyses the reaction a ribonucleoside 5'-diphosphate + ATP = a ribonucleoside 5'-triphosphate + ADP. Functionally, major role in the synthesis of nucleoside triphosphates other than ATP. The ATP gamma phosphate is transferred to the NDP beta phosphate via a ping-pong mechanism, using a phosphorylated active-site intermediate. This is Nucleoside diphosphate kinase from Ruegeria pomeroyi (strain ATCC 700808 / DSM 15171 / DSS-3) (Silicibacter pomeroyi).